A 421-amino-acid polypeptide reads, in one-letter code: F-box/kelch-repeat protein At1g26930 (421 aa).

Positions 54-73 are disordered; it reads TDSSEGEDNGSSSDSGTLIP. Residues 70-117 form the F-box domain; the sequence is TLIPGMNRDDSLSCLIRCSRADYCSIASVNRSLRSLIRSGEIYRLRRL. 5 Kelch repeats span residues 114 to 167, 169 to 212, 213 to 260, 261 to 312, and 320 to 366; these read LRRL…LAVG, DLLV…SYGE, IAVL…FMDG, KFYV…MSAA, and AVVN…GLAF.

This Arabidopsis thaliana (Mouse-ear cress) protein is F-box/kelch-repeat protein At1g26930.